Consider the following 226-residue polypeptide: ATP-dependent dethiobiotin synthetase BioD (226 aa).

14-19 lines the ATP pocket; that stretch reads GIGKTF. Thr18 provides a ligand contact to Mg(2+). The active site involves Lys39. Substrate is bound at residue Ser43. ATP contacts are provided by residues Asp56, 117–120, 177–178, 206–208, and Asn213; these read EGVG, NT, and PHI. Mg(2+) contacts are provided by Asp56 and Glu117.

It belongs to the dethiobiotin synthetase family. As to quaternary structure, homodimer. Mg(2+) is required as a cofactor.

It is found in the cytoplasm. The enzyme catalyses (7R,8S)-7,8-diammoniononanoate + CO2 + ATP = (4R,5S)-dethiobiotin + ADP + phosphate + 3 H(+). It participates in cofactor biosynthesis; biotin biosynthesis; biotin from 7,8-diaminononanoate: step 1/2. Catalyzes a mechanistically unusual reaction, the ATP-dependent insertion of CO2 between the N7 and N8 nitrogen atoms of 7,8-diaminopelargonic acid (DAPA, also called 7,8-diammoniononanoate) to form a ureido ring. This Xylella fastidiosa (strain Temecula1 / ATCC 700964) protein is ATP-dependent dethiobiotin synthetase BioD.